The following is a 114-amino-acid chain: Large ribosomal subunit protein bL19 (114 aa).

The protein belongs to the bacterial ribosomal protein bL19 family.

Functionally, this protein is located at the 30S-50S ribosomal subunit interface and may play a role in the structure and function of the aminoacyl-tRNA binding site. The chain is Large ribosomal subunit protein bL19 (rplS) from Listeria monocytogenes serovar 1/2a (strain ATCC BAA-679 / EGD-e).